A 152-amino-acid polypeptide reads, in one-letter code: D-aminoacyl-tRNA deacylase 1 (152 aa).

The Gly-cisPro motif, important for rejection of L-amino acids motif lies at 140-141 (GP).

It belongs to the DTD family. As to quaternary structure, homodimer.

Its subcellular location is the cytoplasm. The catalysed reaction is glycyl-tRNA(Ala) + H2O = tRNA(Ala) + glycine + H(+). The enzyme catalyses a D-aminoacyl-tRNA + H2O = a tRNA + a D-alpha-amino acid + H(+). In terms of biological role, an aminoacyl-tRNA editing enzyme that deacylates mischarged D-aminoacyl-tRNAs. Hydrolyzes correctly charged, achiral, glycyl-tRNA(Gly). Deacylates mischarged D.melanogaster and E.coli glycyl-tRNA(Ala), protecting cells against glycine mischarging by AlaRS. Acts via tRNA-based rather than protein-based catalysis; rejects L-amino acids rather than detecting D-amino acids in the active site. By recycling D-aminoacyl-tRNA to D-amino acids and free tRNA molecules, this enzyme counteracts the toxicity associated with the formation of D-aminoacyl-tRNA entities in vivo and helps enforce protein L-homochirality. The protein is D-aminoacyl-tRNA deacylase 1 (dtd1) of Leishmania major.